The chain runs to 201 residues: Small ribosomal subunit protein uS4 (201 aa).

The segment at 20 to 46 is disordered; the sequence is SGTGKELSRRPYAPGQHGQDRRGSLSE. In terms of domain architecture, S4 RNA-binding spans 93 to 156; it reads RRLDNVVYRL…KDLQIVKEAL (64 aa).

This sequence belongs to the universal ribosomal protein uS4 family. In terms of assembly, part of the 30S ribosomal subunit. Contacts protein S5. The interaction surface between S4 and S5 is involved in control of translational fidelity.

In terms of biological role, one of the primary rRNA binding proteins, it binds directly to 16S rRNA where it nucleates assembly of the body of the 30S subunit. Functionally, with S5 and S12 plays an important role in translational accuracy. This is Small ribosomal subunit protein uS4 from Ligilactobacillus salivarius (strain UCC118) (Lactobacillus salivarius).